Reading from the N-terminus, the 769-residue chain is Neutral alpha-glucosidase C (769 aa).

The active-site Nucleophile is aspartate 366. The active site involves glutamate 369. Aspartate 442 acts as the Proton donor in catalysis.

This sequence belongs to the glycosyl hydrolase 31 family.

The catalysed reaction is Hydrolysis of terminal, non-reducing (1-&gt;4)-linked alpha-D-glucose residues with release of alpha-D-glucose.. Has alpha-glucosidase activity. The chain is Neutral alpha-glucosidase C (GANC) from Macaca fascicularis (Crab-eating macaque).